We begin with the raw amino-acid sequence, 214 residues long: Ependymin (214 aa).

An N-terminal signal peptide occupies residues 1 to 20; the sequence is MHTVKLLCVVFSCLCAVAWA. 2 N-linked (GlcNAc...) asparagine glycosylation sites follow: N70 and N93.

This sequence belongs to the ependymin family. As to quaternary structure, forms disulfide-linked dimers. Post-translationally, binds calcium through the terminal sialic acids.

The protein localises to the secreted. May play a role in neural plasticity. May be involved during axon regeneration. The protein is Ependymin (epd) of Notemigonus crysoleucas (Golden shiner).